Consider the following 129-residue polypeptide: MLHLHILSWVLAIILFIATYLNISKNQGGTPYFKPLHMVLRLFMLLMLISGFWILIQSFMNGGANHMLLTLKMLCGVAVVGLMEVSIAKRKRHEQSHTMFWITIALIIITMVLGVILPLGPLSKLFGIG.

4 helical membrane-spanning segments follow: residues 1-21, 36-56, 67-87, and 99-119; these read MLHL…ATYL, LHMV…WILI, MLLT…EVSI, and MFWI…ILPL.

The protein belongs to the UPF0344 family.

It is found in the cell membrane. In Staphylococcus aureus (strain bovine RF122 / ET3-1), this protein is UPF0344 protein SAB0838.